A 769-amino-acid chain; its full sequence is Neutral alpha-glucosidase C (769 aa).

Catalysis depends on Asp366, which acts as the Nucleophile. Residue Glu369 is part of the active site. Asp442 functions as the Proton donor in the catalytic mechanism.

This sequence belongs to the glycosyl hydrolase 31 family.

It catalyses the reaction Hydrolysis of terminal, non-reducing (1-&gt;4)-linked alpha-D-glucose residues with release of alpha-D-glucose.. Functionally, has alpha-glucosidase activity. This is Neutral alpha-glucosidase C (GANC) from Macaca fascicularis (Crab-eating macaque).